A 321-amino-acid polypeptide reads, in one-letter code: Ribosomal RNA small subunit methyltransferase H (321 aa).

S-adenosyl-L-methionine contacts are provided by residues 40–42 (GGH), Asp60, Phe84, Asp106, and Gln113.

The protein belongs to the methyltransferase superfamily. RsmH family.

Its subcellular location is the cytoplasm. It catalyses the reaction cytidine(1402) in 16S rRNA + S-adenosyl-L-methionine = N(4)-methylcytidine(1402) in 16S rRNA + S-adenosyl-L-homocysteine + H(+). In terms of biological role, specifically methylates the N4 position of cytidine in position 1402 (C1402) of 16S rRNA. The protein is Ribosomal RNA small subunit methyltransferase H of Haemophilus influenzae (strain PittEE).